The sequence spans 309 residues: Porphobilinogen deaminase (309 aa).

At Cys244 the chain carries S-(dipyrrolylmethanemethyl)cysteine.

Belongs to the HMBS family. Monomer. Requires dipyrromethane as cofactor.

It catalyses the reaction 4 porphobilinogen + H2O = hydroxymethylbilane + 4 NH4(+). Its pathway is porphyrin-containing compound metabolism; protoporphyrin-IX biosynthesis; coproporphyrinogen-III from 5-aminolevulinate: step 2/4. Tetrapolymerization of the monopyrrole PBG into the hydroxymethylbilane pre-uroporphyrinogen in several discrete steps. The chain is Porphobilinogen deaminase from Listeria monocytogenes serotype 4b (strain CLIP80459).